Reading from the N-terminus, the 763-residue chain is ATP-dependent RNA helicase SUV3 homolog, mitochondrial (763 aa).

Residues 1-43 (MQNCRRCISLTGLLRMTLYLRPSFSIDLSLRRLHRAAFLFSRK) constitute a mitochondrion transit peptide. A Helicase ATP-binding domain is found at 181–321 (NARAITRKIV…ALDLLQKICE (141 aa)). 194 to 201 (GPTNSGKT) contacts ATP. Positions 330–508 (RLYDRLTELT…PTADQIELYA (179 aa)) constitute a Helicase C-terminal domain. The disordered stretch occupies residues 724–763 (AQQLGKSNSQSNENSEPVVNSDDEDNYSGIGRKTRKKRRK). Residues 727–741 (LGKSNSQSNENSEPV) show a composition bias toward polar residues.

It belongs to the helicase family. Mg(2+) is required as a cofactor. The cofactor is Mn(2+).

It is found in the mitochondrion. It carries out the reaction ATP + H2O = ADP + phosphate + H(+). Its function is as follows. Major helicase player in mitochondrial RNA metabolism and maintenance. Likely component of the mitochondrial degradosome (mtEXO) complex, that degrades 3' overhang double-stranded RNA with a 3'-to-5' directionality in an ATP-dependent manner. ATPase and ATP-dependent multisubstrate helicase, able to unwind double-stranded (ds) DNA and RNA, and RNA/DNA heteroduplexes in the 5'-to-3' direction. Regulates mRNA stability and is required for the correct processing and maturation of mitochondrial transcripts. The protein is ATP-dependent RNA helicase SUV3 homolog, mitochondrial of Drosophila melanogaster (Fruit fly).